The sequence spans 298 residues: ATP synthase gamma chain (298 aa).

This sequence belongs to the ATPase gamma chain family. As to quaternary structure, F-type ATPases have 2 components, CF(1) - the catalytic core - and CF(0) - the membrane proton channel. CF(1) has five subunits: alpha(3), beta(3), gamma(1), delta(1), epsilon(1). CF(0) has three main subunits: a, b and c.

It localises to the cell inner membrane. Functionally, produces ATP from ADP in the presence of a proton gradient across the membrane. The gamma chain is believed to be important in regulating ATPase activity and the flow of protons through the CF(0) complex. This Francisella tularensis subsp. tularensis (strain WY96-3418) protein is ATP synthase gamma chain.